A 116-amino-acid polypeptide reads, in one-letter code: NADH-ubiquinone oxidoreductase chain 3 (116 aa).

A run of 3 helical transmembrane segments spans residues 8-28, 56-76, and 87-107; these read VAAT…LPSL, FFLV…LLPL, and ISLL…IYEW.

Belongs to the complex I subunit 3 family.

It localises to the mitochondrion membrane. The enzyme catalyses a ubiquinone + NADH + 5 H(+)(in) = a ubiquinol + NAD(+) + 4 H(+)(out). In terms of biological role, core subunit of the mitochondrial membrane respiratory chain NADH dehydrogenase (Complex I) that is believed to belong to the minimal assembly required for catalysis. Complex I functions in the transfer of electrons from NADH to the respiratory chain. The immediate electron acceptor for the enzyme is believed to be ubiquinone. This Squalus acanthias (Spiny dogfish) protein is NADH-ubiquinone oxidoreductase chain 3 (MT-ND3).